Here is a 169-residue protein sequence, read N- to C-terminus: ATP synthase subunit b (169 aa).

A helical transmembrane segment spans residues 11-31; sequence IPSFIAQVVNFGLLLGLLYLF.

The protein belongs to the ATPase B chain family. F-type ATPases have 2 components, F(1) - the catalytic core - and F(0) - the membrane proton channel. F(1) has five subunits: alpha(3), beta(3), gamma(1), delta(1), epsilon(1). F(0) has three main subunits: a(1), b(2) and c(10-14). The alpha and beta chains form an alternating ring which encloses part of the gamma chain. F(1) is attached to F(0) by a central stalk formed by the gamma and epsilon chains, while a peripheral stalk is formed by the delta and b chains.

It localises to the cell membrane. F(1)F(0) ATP synthase produces ATP from ADP in the presence of a proton or sodium gradient. F-type ATPases consist of two structural domains, F(1) containing the extramembraneous catalytic core and F(0) containing the membrane proton channel, linked together by a central stalk and a peripheral stalk. During catalysis, ATP synthesis in the catalytic domain of F(1) is coupled via a rotary mechanism of the central stalk subunits to proton translocation. In terms of biological role, component of the F(0) channel, it forms part of the peripheral stalk, linking F(1) to F(0). This is ATP synthase subunit b from Dehalococcoides mccartyi (strain ATCC BAA-2266 / KCTC 15142 / 195) (Dehalococcoides ethenogenes (strain 195)).